We begin with the raw amino-acid sequence, 183 residues long: Shikimate kinase (183 aa).

18 to 23 (GVGKTT) is a binding site for ATP. Threonine 22 is a Mg(2+) binding site. Positions 40, 64, and 86 each coordinate substrate. An ATP-binding site is contributed by arginine 125. A substrate-binding site is contributed by arginine 143.

This sequence belongs to the shikimate kinase family. In terms of assembly, monomer. The cofactor is Mg(2+).

The protein localises to the cytoplasm. The catalysed reaction is shikimate + ATP = 3-phosphoshikimate + ADP + H(+). The protein operates within metabolic intermediate biosynthesis; chorismate biosynthesis; chorismate from D-erythrose 4-phosphate and phosphoenolpyruvate: step 5/7. Its function is as follows. Catalyzes the specific phosphorylation of the 3-hydroxyl group of shikimic acid using ATP as a cosubstrate. This Oceanobacillus iheyensis (strain DSM 14371 / CIP 107618 / JCM 11309 / KCTC 3954 / HTE831) protein is Shikimate kinase.